An 89-amino-acid polypeptide reads, in one-letter code: Small ribosomal subunit protein uS15 (89 aa).

Belongs to the universal ribosomal protein uS15 family. In terms of assembly, part of the 30S ribosomal subunit. Forms a bridge to the 50S subunit in the 70S ribosome, contacting the 23S rRNA.

One of the primary rRNA binding proteins, it binds directly to 16S rRNA where it helps nucleate assembly of the platform of the 30S subunit by binding and bridging several RNA helices of the 16S rRNA. In terms of biological role, forms an intersubunit bridge (bridge B4) with the 23S rRNA of the 50S subunit in the ribosome. The protein is Small ribosomal subunit protein uS15 of Desulforudis audaxviator (strain MP104C).